The chain runs to 451 residues: Tubulin gamma-1 chain (451 aa).

The residue at position 131 (Ser-131) is a Phosphoserine; by BRSK1. 142–148 (AGGTGSG) serves as a coordination point for GTP.

The protein belongs to the tubulin family. Component of the gamma-tubulin ring complex (gTuRC) consisting of TUBGCP2, TUBGCP3, TUBGCP4, TUBGCP5 and TUBGCP6 and gamma-tubulin TUBG1 or TUBG2. TUBGCP2, TUBGCP3, TUBGCP4, TUBGCP5 and TUBGCP6 assemble in a 5:5:2:1:1 stoichiometry; each is associated with a gamma-tubulin, thereby arranging 14 gamma-tubulins in a helical manner. Gamma-tubulin at the first position is blocked by TUBGCP3 at the last position, allowing 13 protafilaments to grow into a microtubule. The gTuRC (via TUBGCP3 and TUBGCP6) interacts with ACTB and MZT1; the interactions form a luminal bridge that stabilizes the initial structure during complex assembly. The gTuRC (via TUBGCP2) interacts with MZT2A/MZT2B and CDK5RAP2 (via CM1 motif); the interactions play a role in gTuRC activation. Interacts with alpha-beta tubulin heterodimers; the interaction allows microtubules to nucleate from the gTuRC. Interacts with B9D2. Interacts with CDK5RAP2; the interaction is leading to centrosomal localization of TUBG1 and CDK5RAP2. Interacts with CIMAP3. Interacts with SAS6 and NUP62 at the centrosome. Interacts with EML3 (phosphorylated at 'Thr-881') and HAUS8. Interacts with DNM2; this interaction may participate in centrosome cohesion. Interacts with CCDC66. Phosphorylation at Ser-131 by BRSK1 regulates centrosome duplication, possibly by mediating relocation of gamma-tubulin and its associated proteins from the cytoplasm to the centrosome.

Its subcellular location is the cytoplasm. The protein localises to the cytoskeleton. It is found in the microtubule organizing center. The protein resides in the centrosome. It localises to the spindle. Tubulin is the major constituent of microtubules, protein filaments consisting of alpha- and beta-tubulin heterodimers. Gamma-tubulin is a key component of the gamma-tubulin ring complex (gTuRC) which mediates microtubule nucleation. The gTuRC regulates the minus-end nucleation of alpha-beta tubulin heterodimers that grow into microtubule protafilaments, a critical step in centrosome duplication and spindle formation. This Mus musculus (Mouse) protein is Tubulin gamma-1 chain.